The following is a 297-amino-acid chain: Acetaldehyde dehydrogenase (297 aa).

18 to 21 (TGNI) serves as a coordination point for NAD(+). Cys133 serves as the catalytic Acyl-thioester intermediate. Residues 165-173 (SAGPATRLN) and Asn275 contribute to the NAD(+) site.

Belongs to the acetaldehyde dehydrogenase family.

It catalyses the reaction acetaldehyde + NAD(+) + CoA = acetyl-CoA + NADH + H(+). The polypeptide is Acetaldehyde dehydrogenase (Spirochaeta aurantia).